The primary structure comprises 1331 residues: MTADELVFFVNGKKVVEKNADPETTLLVYLRRKLGLCGTKLGCGEGGCGACTVMISKYDRLQNKIVHFSVNACLAPICSLHHVAVTTVEGIGNTQKLHPVQERIARSHGSQCGFCTPGIVMSMYTLLRNQPEPTVEEIENAFQGNLCRCTGYRPILQGFRTFAKDGGCCGGSGNNPNCCMNQTKDQTVSLSPSLFNPEDFKPLDPTQEPIFPPELLRLKDTPQKKLRFEGERVTWIQASTMEELLDLKAQHPDAKLVVGNTEIGIEMKFKNMLFPLIVCPAWIPELNSVVHGPEGISFGASCPLSLVESVLAEEIAKLPEQKTEVFRGVMEQLRWFAGKQVKSVASIGGNIITASPISDLNPVFMASGAKLTLVSRGTRRTVRMDHTFFPGYRKTLLRPEEILLSIEIPYSKEGEFFSAFKQASRREDDIAKVTSGMRVLFKPGTIEVQELSLCFGGMADRTISALKTTPKQLSKSWNEELLQSVCAGLAEELQLAPDAPGGMVEFRRTLTLSFFFKFYLTVLQKLGRADLEDMCGKLDPTFASATLLFQKDPPANVQLFQEVPKDQSEEDMVGRPLPHLAANMQASGEAVYCDDIPRYENELSLRLVTSTRAHAKITSIDTSEAKKVPGFVCFLTAEDVPNSNATGLFNDETVFAKDEVTCVGHIIGAVVADTPEHAQRAARGVKITYEDLPAIITIQDAINNNSFYGSEIKIEKGDLKKGFSEADNVVSGELYIGGQEHFYLETNCTIAVPKGEAGEMELFVSTQNTMKTQSFVAKMLGVPDNRIVVRVKRMGGGFGGKETRSTVVSTALALAAHKTGRPVRCMLDRDEDMLITGGRHPFLAKYKVGFMKTGTVVALEVAHFSNGGNTEDLSRSIMERALFHMDNAYKIPNIRGTGRICKTNLPSNTAFRGFGGPQGMLIAEYWMSEVAITCGLPAEEVRRKNMYKEGDLTHFNQKLEGFTLPRCWDECIASSQYLARKREVEKFNRENCWKKRGLCIIPTKFGISFTLPFLNQGGALVHVYTDGSVLLTHGGTEMGQGLHTKMVQVASRALKIPTSKIHISETSTNTVPNTSPTAASASADLNGQGVYEACQTILKRLEPFKKKKPTGPWEAWVMDAYTSAVSLSATGFYKTPNLGYSFETNSGNPFHYFSYGVACSEVEIDCLTGDHKNLRTDIVMDVGSSLNPAIDIGQVEGAFVQGLGLFTMEELHYSPEGSLHTRGPSTYKIPAFGSIPIEFRVSLLRDCPNKRAIYASKAVGEPPLFLASSIFFAIKDAIRAARAQHGDNAKQLFQLDSPATPEKIRNACVDQFTTLCVTGVPENCKSWSVRI.

The region spanning 4 to 91 (DELVFFVNGK…HVAVTTVEGI (88 aa)) is the 2Fe-2S ferredoxin-type domain. Positions 43, 48, 51, 73, 112, 115, 147, and 149 each coordinate [2Fe-2S] cluster. Residues 228 to 413 (FEGERVTWIQ…LSIEIPYSKE (186 aa)) enclose the FAD-binding PCMH-type domain. FAD-binding positions include 256–263 (LVVGNTEI), F336, 346–350 (SIGGN), D359, L403, and K421. C535 and C992 are joined by a disulfide. Positions 767 and 798 each coordinate Mo-molybdopterin. Residues E802 and R880 each coordinate substrate. Mo-molybdopterin is bound at residue R912. Substrate contacts are provided by F914 and T1010. A1079 provides a ligand contact to Mo-molybdopterin. Catalysis depends on E1261, which acts as the Proton acceptor.

Belongs to the xanthine dehydrogenase family. In terms of assembly, homodimer. Interacts with BTN1A1. [2Fe-2S] cluster serves as cofactor. FAD is required as a cofactor. The cofactor is Mo-molybdopterin. Post-translationally, subject to partial proteolysis; this alters the enzyme from the dehydrogenase form (D) to the oxidase form (O). Contains sulfhydryl groups that are easily oxidized (in vitro); this alters the enzyme from the dehydrogenase form (D) to the oxidase form (O).

It is found in the peroxisome. The protein resides in the cytoplasm. The protein localises to the secreted. The enzyme catalyses xanthine + NAD(+) + H2O = urate + NADH + H(+). It carries out the reaction hypoxanthine + NAD(+) + H2O = xanthine + NADH + H(+). It catalyses the reaction xanthine + O2 + H2O = urate + H2O2. With respect to regulation, can be converted from the dehydrogenase form (D) to the oxidase form (O) irreversibly by proteolysis or reversibly through the oxidation of sulfhydryl groups. Functionally, key enzyme in purine degradation. Catalyzes the oxidation of hypoxanthine to xanthine. Catalyzes the oxidation of xanthine to uric acid. Contributes to the generation of reactive oxygen species. The sequence is that of Xanthine dehydrogenase/oxidase (Xdh) from Rattus norvegicus (Rat).